A 285-amino-acid chain; its full sequence is Bifunctional protein FolD (285 aa).

NADP(+) is bound by residues 169–171 (GRS), S194, and I235.

Belongs to the tetrahydrofolate dehydrogenase/cyclohydrolase family. In terms of assembly, homodimer.

The enzyme catalyses (6R)-5,10-methylene-5,6,7,8-tetrahydrofolate + NADP(+) = (6R)-5,10-methenyltetrahydrofolate + NADPH. The catalysed reaction is (6R)-5,10-methenyltetrahydrofolate + H2O = (6R)-10-formyltetrahydrofolate + H(+). It functions in the pathway one-carbon metabolism; tetrahydrofolate interconversion. In terms of biological role, catalyzes the oxidation of 5,10-methylenetetrahydrofolate to 5,10-methenyltetrahydrofolate and then the hydrolysis of 5,10-methenyltetrahydrofolate to 10-formyltetrahydrofolate. The protein is Bifunctional protein FolD of Microcystis aeruginosa (strain NIES-843 / IAM M-2473).